Consider the following 298-residue polypeptide: Glutamyl-Q tRNA(Asp) synthetase (298 aa).

L-glutamate-binding positions include 9–13 (RFAPS) and Glu45. A 'HIGH' region motif is present at residues 12–22 (PSPSGELHFGS). Residues Cys101, Cys103, Tyr115, and Cys119 each coordinate Zn(2+). Residues Tyr172 and Arg190 each coordinate L-glutamate. Residues 228–232 (KLSKQ) carry the 'KMSKS' region motif. Lys231 lines the ATP pocket.

This sequence belongs to the class-I aminoacyl-tRNA synthetase family. GluQ subfamily. Requires Zn(2+) as cofactor.

Its function is as follows. Catalyzes the tRNA-independent activation of glutamate in presence of ATP and the subsequent transfer of glutamate onto a tRNA(Asp). Glutamate is transferred on the 2-amino-5-(4,5-dihydroxy-2-cyclopenten-1-yl) moiety of the queuosine in the wobble position of the QUC anticodon. The polypeptide is Glutamyl-Q tRNA(Asp) synthetase (Salmonella paratyphi A (strain ATCC 9150 / SARB42)).